Here is a 213-residue protein sequence, read N- to C-terminus: Calcium-dependent cell adhesion molecule 1 (213 aa).

4 consecutive repeat copies span residues Met1–Ser48, Asn49–Gln97, Trp98–Pro146, and Asp147–Asn194. The segment at Met1–Asn194 is 4 X approximate tandem repeats.

It belongs to the Dictyostelium CAD family. Post-translationally, the N-terminus is blocked.

It is found in the cell membrane. Mediates calcium-dependent cell-cell adhesion during the early stage of development. The protein is Calcium-dependent cell adhesion molecule 1 (cadA) of Dictyostelium discoideum (Social amoeba).